A 244-amino-acid chain; its full sequence is Tubulin-folding cofactor B (244 aa).

M1 is subject to N-acetylmethionine. Phosphotyrosine is present on Y98. S110 bears the Phosphoserine mark. In terms of domain architecture, CAP-Gly spans 183–225 (GLTDFKPGYWIGIRYDEPLGKNDGSVNGKRYFECQAKYGAFVK). The residue at position 219 (K219) is an N6-acetyllysine.

The protein belongs to the TBCB family. Supercomplex made of cofactors A to E. Cofactors A and D function by capturing and stabilizing tubulin in a quasi-native conformation. Cofactor E binds to the cofactor D-tubulin complex; interaction with cofactor C then causes the release of tubulin polypeptides that are committed to the native state. Cofactors B and E can form a heterodimer which binds to alpha-tubulin and enhances their ability to dissociate tubulin heterodimers. Interacts with GAN. Interacts with DCTN1. In terms of processing, ubiquitinated in the presence of GAN which targets it for degradation by the proteasome. Post-translationally, phosphorylation by PAK1 is required for normal function.

The protein resides in the cytoplasm. It is found in the cytoskeleton. Its function is as follows. Binds to alpha-tubulin folding intermediates after their interaction with cytosolic chaperonin in the pathway leading from newly synthesized tubulin to properly folded heterodimer. Involved in regulation of tubulin heterodimer dissociation. May function as a negative regulator of axonal growth. The sequence is that of Tubulin-folding cofactor B (TBCB) from Bos taurus (Bovine).